The chain runs to 366 residues: Histidinol-phosphate aminotransferase (366 aa).

At K226 the chain carries N6-(pyridoxal phosphate)lysine.

The protein belongs to the class-II pyridoxal-phosphate-dependent aminotransferase family. Histidinol-phosphate aminotransferase subfamily. It depends on pyridoxal 5'-phosphate as a cofactor.

The enzyme catalyses L-histidinol phosphate + 2-oxoglutarate = 3-(imidazol-4-yl)-2-oxopropyl phosphate + L-glutamate. It functions in the pathway amino-acid biosynthesis; L-histidine biosynthesis; L-histidine from 5-phospho-alpha-D-ribose 1-diphosphate: step 7/9. The protein is Histidinol-phosphate aminotransferase of Methanosarcina barkeri (strain Fusaro / DSM 804).